The chain runs to 79 residues: Small ribosomal subunit protein uS17 (79 aa).

Belongs to the universal ribosomal protein uS17 family. Part of the 30S ribosomal subunit.

Its function is as follows. One of the primary rRNA binding proteins, it binds specifically to the 5'-end of 16S ribosomal RNA. In Rhizobium leguminosarum bv. trifolii (strain WSM2304), this protein is Small ribosomal subunit protein uS17.